We begin with the raw amino-acid sequence, 100 residues long: uncharacterized protein (100 aa).

2 helical membrane-spanning segments follow: residues 50-70 (LLIFAVGFPWSKLVLASFSLF) and 75-95 (DVFLIVAIVSLFLISSASPEV).

It is found in the membrane. This is an uncharacterized protein from Saccharomyces cerevisiae (strain ATCC 204508 / S288c) (Baker's yeast).